Consider the following 326-residue polypeptide: Zona pellucida-binding protein 2 (326 aa).

Positions 1-19 (MLAWALLYAVLWSLAGVGS) are cleaved as a signal peptide. N86, N220, and N256 each carry an N-linked (GlcNAc...) asparagine glycan.

The protein belongs to the zona pellucida-binding protein Sp38 family. In terms of processing, N-glycosylated. Expressed specifically in male germ cells.

Its subcellular location is the cytoplasmic vesicle. The protein localises to the secretory vesicle. It localises to the acrosome. It is found in the secreted. In terms of biological role, is implicated in sperm-oocyte interaction during fertilization. The protein is Zona pellucida-binding protein 2 (Zpbp2) of Mus musculus (Mouse).